We begin with the raw amino-acid sequence, 554 residues long: Asparagine--tRNA ligase, cytoplasmic (554 aa).

This sequence belongs to the class-II aminoacyl-tRNA synthetase family.

Its subcellular location is the cytoplasm. It localises to the cytosol. The enzyme catalyses tRNA(Asn) + L-asparagine + ATP = L-asparaginyl-tRNA(Asn) + AMP + diphosphate + H(+). In terms of biological role, catalyzes the attachment of asparagine to tRNA(Asn) in a two-step reaction: asparagine is first activated by ATP to form Asn-AMP and then transferred to the acceptor end of tRNA(Asn). In Saccharomyces cerevisiae (strain ATCC 204508 / S288c) (Baker's yeast), this protein is Asparagine--tRNA ligase, cytoplasmic.